Here is a 439-residue protein sequence, read N- to C-terminus: Homogentisate 1,2-dioxygenase (439 aa).

The active-site Proton acceptor is His-289. Residues His-332 and Glu-338 each coordinate Fe cation. 2 residues coordinate homogentisate: Tyr-347 and His-368. His-368 lines the Fe cation pocket.

The protein belongs to the homogentisate dioxygenase family. In terms of assembly, hexamer; dimer of trimers. Fe cation serves as cofactor.

It catalyses the reaction homogentisate + O2 = 4-maleylacetoacetate + H(+). It functions in the pathway amino-acid degradation; L-phenylalanine degradation; acetoacetate and fumarate from L-phenylalanine: step 4/6. Involved in the catabolism of homogentisate (2,5-dihydroxyphenylacetate or 2,5-OH-PhAc), a central intermediate in the degradation of phenylalanine and tyrosine. Catalyzes the oxidative ring cleavage of the aromatic ring of homogentisate to yield maleylacetoacetate. This Xanthomonas euvesicatoria pv. vesicatoria (strain 85-10) (Xanthomonas campestris pv. vesicatoria) protein is Homogentisate 1,2-dioxygenase.